Here is a 318-residue protein sequence, read N- to C-terminus: Olfactory receptor 2T34 (318 aa).

The Extracellular portion of the chain corresponds to 1 to 30; it reads MCSGNQTSQNQTASTDFTLTGLFAESKHAA. N-linked (GlcNAc...) asparagine glycans are attached at residues Asn5 and Asn10. Residues 31–54 traverse the membrane as a helical segment; sequence LLYTVTFLLFLMALTGNALLILLI. The Cytoplasmic segment spans residues 55–62; it reads HSEPRLHT. The helical transmembrane segment at 63-84 threads the bilayer; the sequence is PMYFFISQLALMDLMYLCVTVP. Residues 85–105 lie on the Extracellular side of the membrane; it reads KMLVGQVTGDDTISPSGCGIQ. The cysteines at positions 102 and 194 are disulfide-linked. A helical membrane pass occupies residues 106–125; it reads MFFHLTLAGAEVFLLAAMAY. Residues 126–144 lie on the Cytoplasmic side of the membrane; that stretch reads DRYAAVCRPLHYPLLMNQR. The helical transmembrane segment at 145–163 threads the bilayer; the sequence is VCQLLVSACWVLGMVDGLL. Residues 164–200 lie on the Extracellular side of the membrane; sequence LTPITMSFPFCQSRKILSFFCETPALLKLSCSDVSLY. A helical membrane pass occupies residues 201-224; it reads KMLTYLCCILMLLTPIMVISSSYT. The Cytoplasmic segment spans residues 225–241; it reads LILHLIHRMNSAAGRRK. The helical transmembrane segment at 242 to 264 threads the bilayer; sequence ALATCSSHMIIVLLLFGASFYTY. Topologically, residues 265–277 are extracellular; the sequence is MLRSSYHTAEQDM. A helical transmembrane segment spans residues 278 to 297; it reads MVSAFYTIFTPVLNPLIYSL. The Cytoplasmic segment spans residues 298 to 318; it reads RNKDVTRALRSMMQSRMNQEK.

Belongs to the G-protein coupled receptor 1 family.

The protein localises to the cell membrane. In terms of biological role, odorant receptor. This Homo sapiens (Human) protein is Olfactory receptor 2T34 (OR2T34).